We begin with the raw amino-acid sequence, 523 residues long: Probable DNA ligase (523 aa).

Residue E210 participates in ATP binding. K212 acts as the N6-AMP-lysine intermediate in catalysis. Residues R217, R232, E261, F317, R388, and K394 each coordinate ATP.

It belongs to the ATP-dependent DNA ligase family. The cofactor is Mg(2+).

It catalyses the reaction ATP + (deoxyribonucleotide)n-3'-hydroxyl + 5'-phospho-(deoxyribonucleotide)m = (deoxyribonucleotide)n+m + AMP + diphosphate.. DNA ligase that seals nicks in double-stranded DNA during DNA replication, DNA recombination and DNA repair. This Nocardia farcinica (strain IFM 10152) protein is Probable DNA ligase.